A 153-amino-acid polypeptide reads, in one-letter code: Small ribosomal subunit protein uS13 (153 aa).

Positions R129–N153 are disordered. A compositionally biased stretch (polar residues) spans V143 to N153.

Belongs to the universal ribosomal protein uS13 family. In terms of assembly, part of the 30S ribosomal subunit. Forms a loose heterodimer with protein S19. Forms two bridges to the 50S subunit in the 70S ribosome.

Located at the top of the head of the 30S subunit, it contacts several helices of the 16S rRNA. In the 70S ribosome it contacts the 23S rRNA (bridge B1a) and protein L5 of the 50S subunit (bridge B1b), connecting the 2 subunits; these bridges are implicated in subunit movement. The sequence is that of Small ribosomal subunit protein uS13 from Methanosphaera stadtmanae (strain ATCC 43021 / DSM 3091 / JCM 11832 / MCB-3).